The chain runs to 247 residues: uncharacterized protein (247 aa).

2 stretches are compositionally biased toward low complexity: residues 1-12 (MFSPQQPMRNYP) and 21-43 (PNQR…AQQQ). Disordered stretches follow at residues 1 to 43 (MFSP…AQQQ) and 157 to 247 (LSKS…RLYI). Basic and acidic residues-rich tracts occupy residues 170-196 (ESEK…DGNK) and 210-229 (KTTD…KKEA).

This is an uncharacterized protein from Bacillus subtilis (strain 168).